A 361-amino-acid polypeptide reads, in one-letter code: NADP-dependent alcohol dehydrogenase 7 (361 aa).

Position 46 (C46) interacts with Zn(2+). Residues G47 and H51 each coordinate NADP(+). Positions 68, 100, 103, 106, 114, and 164 each coordinate Zn(2+). Residues I189, G191, I192, S211, R212, K216, C251, S253, S256, I276, S300, and I302 each contribute to the NADP(+) site. S316 carries the phosphoserine modification. R349 is a binding site for NADP(+).

Belongs to the zinc-containing alcohol dehydrogenase family. As to quaternary structure, homodimer. Requires Zn(2+) as cofactor.

The catalysed reaction is a primary alcohol + NADP(+) = an aldehyde + NADPH + H(+). The enzyme catalyses (E)-cinnamyl alcohol + NADP(+) = (E)-cinnamaldehyde + NADPH + H(+). It catalyses the reaction 3-methylbutanol + NADP(+) = 3-methylbutanal + NADPH + H(+). Its function is as follows. NADP-dependent alcohol dehydrogenase with a broad substrate specificity. The oxidative reactions are more than 100 times less efficient than the corresponding reductions, suggesting that the enzyme acts as an aldehyde reductase, rather than as an alcohol dehydrogenase. In Saccharomyces cerevisiae (strain ATCC 204508 / S288c) (Baker's yeast), this protein is NADP-dependent alcohol dehydrogenase 7 (ADH7).